A 685-amino-acid chain; its full sequence is ATP-dependent permease MDL1 (685 aa).

A compositionally biased stretch (polar residues) spans Phe-48–Ser-70. Positions Phe-48–Arg-76 are disordered. A glycan (N-linked (GlcNAc...) asparagine) is linked at Asn-63. The helical transmembrane segment at Leu-96–Leu-116 threads the bilayer. An ABC transmembrane type-1 domain is found at Ile-97 to Lys-407. Residues Thr-125–Asp-147 form a disordered region. Over residues Asp-129–Asp-141 the composition is skewed to acidic residues. A helical transmembrane segment spans residues Phe-158–Leu-180. Asn-239 carries an N-linked (GlcNAc...) asparagine glycan. The chain crosses the membrane as a helical span at residues Leu-266 to Tyr-282. A glycan (N-linked (GlcNAc...) asparagine) is linked at Asn-336. Helical transmembrane passes span Gly-353 to Ala-373 and Leu-381 to Phe-401. Residues Ile-440–Lys-680 enclose the ABC transporter domain. Residue Gly-475–Ser-482 participates in ATP binding. N-linked (GlcNAc...) asparagine glycans are attached at residues Asn-553 and Asn-576.

It belongs to the ABC transporter superfamily. ABCB family. Mitochondrial peptide exporter (TC 3.A.1.212) subfamily.

It localises to the membrane. This is ATP-dependent permease MDL1 (MDL1) from Candida albicans (Yeast).